Consider the following 235-residue polypeptide: Exosome complex component RRP46 (235 aa).

Basic and acidic residues predominate over residues 1–13 (MEEETHTDAKIRA). Residues 1-24 (MEEETHTDAKIRAENGTGSSPRGP) are disordered. Phosphoserine is present on Ser20.

It belongs to the RNase PH family. Homodimer. Component of the RNA exosome core complex (Exo-9), composed of EXOSC1, EXOSC2, EXOSC3, EXOSC4, EXOSC5, EXOSC6, EXOSC7, EXOSC8 and EXOSC9; within the complex interacts with EXOSC3, EXOSC8, and EXOSC9. The catalytically inactive RNA exosome core complex (Exo-9) associates with the catalytic subunit EXOSC10/RRP6. Exo-9 may associate with DIS3 to form the nucleolar exosome complex, or DIS3L to form the cytoplasmic exosome complex. Exo-9 is formed by a hexameric base ring consisting of the heterodimers EXOSC4-EXOSC9, EXOSC5-EXOSC8 and EXOSC6-EXOSC7, and a cap ring consisting of EXOSC1, EXOSC2 and EXOSC3. The RNA exosome complex associates with cofactors C1D/RRP47, MPHOSPH6/MPP6 and MTREX/MTR4. Interacts with GTPBP1. Interacts with ZC3HAV1. Interacts with DDX17 only in the presence of ZC3HAV1 in an RNA-independent manner. In terms of tissue distribution, highly expressed in a variety of hematopoietic and epithelial tumor cell lines, but not in normal hematopoietic tissues or other normal tissue, with the exception of testis.

It is found in the nucleus. Its subcellular location is the nucleolus. The protein localises to the cytoplasm. In terms of biological role, non-catalytic component of the RNA exosome complex which has 3'-&gt;5' exoribonuclease activity and participates in a multitude of cellular RNA processing and degradation events. In the nucleus, the RNA exosome complex is involved in proper maturation of stable RNA species such as rRNA, snRNA and snoRNA, in the elimination of RNA processing by-products and non-coding 'pervasive' transcripts, such as antisense RNA species and promoter-upstream transcripts (PROMPTs), and of mRNAs with processing defects, thereby limiting or excluding their export to the cytoplasm. The RNA exosome may be involved in Ig class switch recombination (CSR) and/or Ig variable region somatic hypermutation (SHM) by targeting AICDA deamination activity to transcribed dsDNA substrates. In the cytoplasm, the RNA exosome complex is involved in general mRNA turnover and specifically degrades inherently unstable mRNAs containing AU-rich elements (AREs) within their 3' untranslated regions, and in RNA surveillance pathways, preventing translation of aberrant mRNAs. It seems to be involved in degradation of histone mRNA. The catalytic inactive RNA exosome core complex of 9 subunits (Exo-9) is proposed to play a pivotal role in the binding and presentation of RNA for ribonucleolysis, and to serve as a scaffold for the association with catalytic subunits and accessory proteins or complexes. In vitro, EXOSC5 does not bind or digest single-stranded RNA and binds to double-stranded DNA without detectable DNase activity. The sequence is that of Exosome complex component RRP46 (EXOSC5) from Homo sapiens (Human).